The following is a 1436-amino-acid chain: DNA polymerase III PolC-type (1436 aa).

The region spanning 420-576 (YVVFDVETTG…YDTEATAYIF (157 aa)) is the Exonuclease domain.

It belongs to the DNA polymerase type-C family. PolC subfamily.

Its subcellular location is the cytoplasm. The catalysed reaction is DNA(n) + a 2'-deoxyribonucleoside 5'-triphosphate = DNA(n+1) + diphosphate. In terms of biological role, required for replicative DNA synthesis. This DNA polymerase also exhibits 3' to 5' exonuclease activity. In Staphylococcus aureus (strain MW2), this protein is DNA polymerase III PolC-type.